Reading from the N-terminus, the 156-residue chain is MNINATLIGQSVAFLIFVLFCMKYVWPPVITALQERQKKIADGLDAANRAARDLELAQEKAGQQLREAKAQAAEIIEQSKKRAAQLVDEAREQARVEADRVKAQALAEIEQELNSAKDALRAQVGALAVGGAEKILGATIDQNAHAELVNKLAAEI.

The helical transmembrane segment at 12 to 32 (VAFLIFVLFCMKYVWPPVITA) threads the bilayer.

The protein belongs to the ATPase B chain family. F-type ATPases have 2 components, F(1) - the catalytic core - and F(0) - the membrane proton channel. F(1) has five subunits: alpha(3), beta(3), gamma(1), delta(1), epsilon(1). F(0) has three main subunits: a(1), b(2) and c(10-14). The alpha and beta chains form an alternating ring which encloses part of the gamma chain. F(1) is attached to F(0) by a central stalk formed by the gamma and epsilon chains, while a peripheral stalk is formed by the delta and b chains.

The protein localises to the cell inner membrane. F(1)F(0) ATP synthase produces ATP from ADP in the presence of a proton or sodium gradient. F-type ATPases consist of two structural domains, F(1) containing the extramembraneous catalytic core and F(0) containing the membrane proton channel, linked together by a central stalk and a peripheral stalk. During catalysis, ATP synthesis in the catalytic domain of F(1) is coupled via a rotary mechanism of the central stalk subunits to proton translocation. In terms of biological role, component of the F(0) channel, it forms part of the peripheral stalk, linking F(1) to F(0). The chain is ATP synthase subunit b from Pseudomonas putida (strain ATCC 47054 / DSM 6125 / CFBP 8728 / NCIMB 11950 / KT2440).